The primary structure comprises 221 residues: Superoxide dismutase [Mn] 1, mitochondrial (221 aa).

A mitochondrion-targeting transit peptide spans 1–24 (MLQNTVRCVSKLVQPITGVAAVRS). 4 residues coordinate Mn(2+): histidine 50, histidine 98, aspartate 182, and histidine 186.

This sequence belongs to the iron/manganese superoxide dismutase family. Homotetramer. Mn(2+) serves as cofactor.

It is found in the mitochondrion matrix. It catalyses the reaction 2 superoxide + 2 H(+) = H2O2 + O2. Destroys superoxide anion radicals which are normally produced within the cells and which are toxic to biological systems. The protein is Superoxide dismutase [Mn] 1, mitochondrial (sod-2) of Caenorhabditis elegans.